Consider the following 118-residue polypeptide: UPF0102 protein RHA1_ro06551 (118 aa).

It belongs to the UPF0102 family.

The protein is UPF0102 protein RHA1_ro06551 of Rhodococcus jostii (strain RHA1).